The chain runs to 309 residues: Mitochondrial import receptor subunit TOM34 (309 aa).

3 TPR repeats span residues 9–42, 51–84, and 86–118; these read VEELRAAGNESFRNGQYAEASALYGRALRVLQAQ, SVLYSNRAACHLKDGNCRDCIKDCTSALALVPFS, and KPLLRRASAYEALEKYPMAYVDYKTVLQIDDSV. Serine 160 is modified (phosphoserine). Positions 161 to 189 are disordered; that stretch reads LPSENHKEMAKSKSKETTATKNRVPSAGD. Positions 164 to 178 are enriched in basic and acidic residues; it reads ENHKEMAKSKSKETT. Serine 186 is modified (phosphoserine). 3 TPR repeats span residues 193 to 226, 227 to 260, and 262 to 294; these read AKVLKEEGNELVKKGNHKKAIEKYSESLLCSNLE, SATYSNRALCYLVLKQYTEAVKDCTEALKLDGKN, and KAFYRRAQAHKALKDYKSSFADISNLLQIEPRN. Residue lysine 197 forms a Glycyl lysine isopeptide (Lys-Gly) (interchain with G-Cter in SUMO2) linkage.

It belongs to the Tom34 family. In terms of assembly, interacts with HSP90A, VCP, ATP6V1D, KIAA0665, AMPK, and DMAP1 through its TPR repeat.

It is found in the cytoplasm. Its subcellular location is the mitochondrion outer membrane. In terms of biological role, plays a role in the import of cytosolically synthesized preproteins into mitochondria. Binds the mature portion of precursor proteins. Interacts with cellular components, and possesses weak ATPase activity. May be a chaperone-like protein that helps to keep newly synthesized precursors in an unfolded import compatible state. The sequence is that of Mitochondrial import receptor subunit TOM34 (TOMM34) from Pongo abelii (Sumatran orangutan).